The following is a 243-amino-acid chain: Probable phosphatase CLD_1129 (243 aa).

The Zn(2+) site is built by His8, His10, His16, His41, Glu74, His102, His132, Asp192, and His194.

Belongs to the PHP family. Zn(2+) is required as a cofactor.

This is Probable phosphatase CLD_1129 from Clostridium botulinum (strain Okra / Type B1).